The sequence spans 95 residues: Small ribosomal subunit protein bS20 (95 aa).

It belongs to the bacterial ribosomal protein bS20 family.

Functionally, binds directly to 16S ribosomal RNA. The protein is Small ribosomal subunit protein bS20 of Fervidobacterium nodosum (strain ATCC 35602 / DSM 5306 / Rt17-B1).